The chain runs to 848 residues: Neuroligin-3 (848 aa).

An N-terminal signal peptide occupies residues 1–37; sequence MWLRLGPPSLSLSPKPTVGRSLCLTLWFLSLALRAST. The Extracellular segment spans residues 38 to 709; sequence QAPAPTVNTH…NPRDYSTELS (672 aa). A glycan (N-linked (GlcNAc...) asparagine) is linked at N98. C106 and C141 are joined by a disulfide. The disordered stretch occupies residues 170–195; that stretch reads RKGGSGAKKQGEDLADNDGDEDEDIR. Positions 182–194 are enriched in acidic residues; the sequence is DLADNDGDEDEDI. 2 cysteine pairs are disulfide-bonded: C340–C351 and C510–C544. A glycan (N-linked (GlcNAc...) asparagine) is linked at N545. Polar residues-rich tracts occupy residues 645 to 656 and 677 to 689; these read TKVPPPDTTHSS and AYSN…SWNG. Positions 645–694 are disordered; it reads TKVPPPDTTHSSHITRRPNGKTWSTKRPAISPAYSNENAQGSWNGDQDAG. A helical membrane pass occupies residues 710 to 730; it reads VTIAVGASLLFLNVLAFAALY. Residues 731-848 are Cytoplasmic-facing; the sequence is YRKDKRRQEP…LPHSHSTTRV (118 aa). S745 carries the phosphoserine modification. At Y792 the chain carries Phosphotyrosine.

It belongs to the type-B carboxylesterase/lipase family. As to quaternary structure, homodimer, and heterodimer with NLGN1 and NLGN2. Interacts with neurexins NRXN1, NRXN2 and NRXN3. Interaction with neurexins is mediated by heparan sulfate glycan modification on neurexin. Interacts (via its C-terminus) with DLG4/PSD-95 (via PDZ domain 3). In terms of tissue distribution, expressed in the blood vessel walls (at protein level). Detected in throughout the brain and in spinal cord. Detected in brain, and at lower levels in pancreas islet beta cells.

It is found in the cell membrane. The protein localises to the synapse. Its function is as follows. Cell surface protein involved in cell-cell-interactions via its interactions with neurexin family members. Plays a role in synapse function and synaptic signal transmission, and may mediate its effects by clustering other synaptic proteins. May promote the initial formation of synapses, but is not essential for this. May also play a role in glia-glia or glia-neuron interactions in the developing peripheral nervous system. This chain is Neuroligin-3 (NLGN3), found in Homo sapiens (Human).